Consider the following 70-residue polypeptide: Alpha-toxin Bot9 (70 aa).

Residues 6–69 (RDGYIVYPNN…PIKDPSYKCY (64 aa)) form the LCN-type CS-alpha/beta domain. 4 disulfide bridges follow: cysteine 16–cysteine 68, cysteine 20–cysteine 40, cysteine 26–cysteine 50, and cysteine 30–cysteine 52.

Belongs to the long (4 C-C) scorpion toxin superfamily. Sodium channel inhibitor family. Alpha subfamily. As to expression, expressed by the venom gland.

It is found in the secreted. In terms of biological role, alpha toxins bind voltage-independently at site-3 of sodium channels (Nav) and inhibit the inactivation of the activated channels, thereby blocking neuronal transmission. This toxin is active against rat Nav1.2/SCN2A and B.germanica Nav1. The protein is Alpha-toxin Bot9 of Buthus occitanus tunetanus (Common European scorpion).